Consider the following 195-residue polypeptide: Magnetosome membrane protein 22 (195 aa).

The segment covering 1 to 28 (MAAQTAASEAPAPAAAPADSPTTAGPTP) has biased composition (low complexity). A disordered region spans residues 1-31 (MAAQTAASEAPAPAAAPADSPTTAGPTPDSV). 3 consecutive transmembrane segments (helical) span residues 45–65 (VLAAVAASIVPVPLFDIAAVV), 90–110 (SVIASLAGGVVGYGAGMAVAV), and 115–135 (LIPGVGWMLGMVSLPVIAGAT).

It localises to the magnetosome membrane. The protein is Magnetosome membrane protein 22 of Magnetospirillum gryphiswaldense (strain DSM 6361 / JCM 21280 / NBRC 15271 / MSR-1).